Consider the following 1684-residue polypeptide: Protein Wiz (1684 aa).

A disordered region spans residues 1–77; sequence MEGLLAGGLA…PGLSEALPRA (77 aa). The span at 13–24 shows a compositional bias: basic and acidic residues; the sequence is DHPRGPAPREDI. 5 consecutive C2H2-type zinc fingers follow at residues 308 to 330, 345 to 367, 454 to 477, 734 to 756, and 802 to 824; these read FPCIECSIYFKHKEHLLEHMSQH, LACSECGWAFTEPTALEQHWQLH, NTCVHCGFTAPSKSLLREHTRLVH, RKCPYCPDRFHYGIGLANHVRGH, and MRCDFCGAGFDTRAGLSSHARAH. Residues 854-876 are disordered; it reads LPPSPLGREPGGPPRSFLTSRRP. The segment at 903–925 adopts a C2H2-type 6 zinc-finger fold; it reads TTCEVCGACFETRKGLSSHARSH. Glycyl lysine isopeptide (Lys-Gly) (interchain with G-Cter in SUMO2) cross-links involve residues K916, K972, K988, K1000, and K1021. A disordered region spans residues 1005–1072; that stretch reads FSAKGLTHPS…PLNLTSGPEP (68 aa). Phosphoserine is present on S1029. Residue T1031 is modified to Phosphothreonine. Residues K1033 and K1038 each participate in a glycyl lysine isopeptide (Lys-Gly) (interchain with G-Cter in SUMO2) cross-link. S1039 and S1045 each carry phosphoserine. A compositionally biased stretch (polar residues) spans 1040-1057; sequence PQLSLSPRPTSPKAQWPQ. Position 1049 is a phosphothreonine (T1049). Phosphoserine occurs at positions 1050 and 1058. Residues 1063-1067 form an interaction with CTBP1 and CTBP2 1 region; the sequence is PLNLT. Residues 1076-1098 form a C2H2-type 7 zinc finger; it reads IRCEFCGEFFENRKGLSSHARSH. K1089 participates in a covalent cross-link: Glycyl lysine isopeptide (Lys-Gly) (interchain with G-Cter in SUMO2). S1112 and S1139 each carry phosphoserine. The disordered stretch occupies residues 1127–1208; sequence SRPGGHLHPP…GLATPSLPKK (82 aa). Glycyl lysine isopeptide (Lys-Gly) (interchain with G-Cter in SUMO2) cross-links involve residues K1141 and K1145. A phosphoserine mark is found at S1155, S1160, and S1167. Glycyl lysine isopeptide (Lys-Gly) (interchain with G-Cter in SUMO2) cross-links involve residues K1171 and K1172. S1179 and S1184 each carry phosphoserine. The residue at position 1195 (K1195) is an N6,N6,N6-trimethyllysine; by EHMT2; alternate. K1195 is subject to N6,N6-dimethyllysine; by EHMT2; alternate. K1210 is covalently cross-linked (Glycyl lysine isopeptide (Lys-Gly) (interchain with G-Cter in SUMO2)). An interaction with CTBP1 and CTBP2 2 region spans residues 1247–1251; sequence PLNLS. The C2H2-type 8 zinc-finger motif lies at 1260–1282; that stretch reads IRCEFCGEFFENRKGLSSHARSH. K1273 participates in a covalent cross-link: Glycyl lysine isopeptide (Lys-Gly) (interchain with G-Cter in SUMO2). A Phosphoserine modification is found at S1296. K1315 is covalently cross-linked (Glycyl lysine isopeptide (Lys-Gly) (interchain with G-Cter in SUMO2)). The interval 1320-1384 is disordered; it reads AGDLAPALTE…SKPSAASYLG (65 aa). Over residues 1335-1351 the composition is skewed to low complexity; the sequence is AAPGALHSPLPLSPLAS. Phosphoserine is present on residues S1342 and S1347. Glycyl lysine isopeptide (Lys-Gly) (interchain with G-Cter in SUMO2) cross-links involve residues K1376, K1389, K1403, K1405, and K1415. The C2H2-type 9 zinc finger occupies 1430–1452; sequence ACCELCGLYFENRKALASHARAH. Residues K1481, K1497, and K1510 each participate in a glycyl lysine isopeptide (Lys-Gly) (interchain with G-Cter in SUMO2) cross-link. Disordered regions lie at residues 1496 to 1587 and 1592 to 1611; these read TKKF…GEEV and QKLEEVRQPPPRVRPVPSLV. The residue at position 1550 (S1550) is a Phosphoserine. A Glycyl lysine isopeptide (Lys-Gly) (interchain with G-Cter in SUMO1); alternate cross-link involves residue K1556. Residue K1556 forms a Glycyl lysine isopeptide (Lys-Gly) (interchain with G-Cter in SUMO2); alternate linkage. Positions 1556 to 1574 are enriched in basic and acidic residues; sequence KSEEHQRQNINKFERRQAR. Residues K1567 and K1593 each participate in a glycyl lysine isopeptide (Lys-Gly) (interchain with G-Cter in SUMO2) cross-link. A compositionally biased stretch (pro residues) spans 1599–1611; the sequence is QPPPRVRPVPSLV. Residues 1629–1655 form a C2H2-type 10 zinc finger; the sequence is LKCRFCEVEFQGPLSIQEEWVRHLQRH. Residues 1662 to 1684 form a disordered region; the sequence is SKADPPPEEPQAPQAQTAAVEAP. Residue K1663 forms a Glycyl lysine isopeptide (Lys-Gly) (interchain with G-Cter in SUMO2) linkage. Low complexity predominate over residues 1672 to 1684; it reads QAPQAQTAAVEAP.

Belongs to the krueppel C2H2-type zinc-finger protein family. In terms of assembly, part of a complex containing at least CDYL, REST, WIZ, SETB1, EHMT1 and EHMT2. Interacts with EHMT1, EHMT2, CTBP1 and CTBP2. According to PubMed:9795207, isoform L and isoform S are brain-specific. According to PubMed:16702210, isoform S is ubiquitously expressed.

The protein localises to the nucleus. Functionally, may link EHMT1 and EHMT2 histone methyltransferases to the CTBP corepressor machinery. May be involved in EHMT1-EHMT2 heterodimer formation and stabilization. The protein is Protein Wiz (Wiz) of Mus musculus (Mouse).